The sequence spans 1183 residues: PAN2-PAN3 deadenylation complex catalytic subunit PAN2 (1183 aa).

WD repeat units follow at residues 150 to 189 (SIEN…KAAQ) and 289 to 328 (DVSS…ENAA). Residues 331-478 (ENGSIVLPPF…EEIEEELNDG (148 aa)) are linker. The interval 439–470 (AEGRARGKGRRDSGPRFRSEKDKKGTYKDKEE) is disordered. Over residues 448–469 (RRDSGPRFRSEKDKKGTYKDKE) the composition is skewed to basic and acidic residues. A USP domain is found at 479–864 (EVPKYYRKVE…VPAVIILERE (386 aa)). An Exonuclease domain is found at 916-1085 (VAIDAEFVAL…HDSIEDAHFA (170 aa)). The a divalent metal cation site is built by D919, E921, D1028, and D1081. The interval 1155–1183 (KSRMATPPPPTKLGLPQWASQNSPSPLRR) is disordered. The span at 1172–1183 (WASQNSPSPLRR) shows a compositional bias: polar residues.

It belongs to the peptidase C19 family. PAN2 subfamily. In terms of assembly, forms a heterotrimer with an asymmetric homodimer of the regulatory subunit PAN3 to form the poly(A)-nuclease (PAN) deadenylation complex. A divalent metal cation is required as a cofactor.

It localises to the cytoplasm. It catalyses the reaction Exonucleolytic cleavage of poly(A) to 5'-AMP.. Its activity is regulated as follows. Positively regulated by the regulatory subunit PAN3. Its function is as follows. Catalytic subunit of the poly(A)-nuclease (PAN) deadenylation complex, one of two cytoplasmic mRNA deadenylases involved in mRNA turnover. PAN specifically shortens poly(A) tails of RNA and the activity is stimulated by poly(A)-binding protein PAB1. PAN deadenylation is followed by rapid degradation of the shortened mRNA tails by the CCR4-NOT complex. Deadenylated mRNAs are then degraded by two alternative mechanisms, namely exosome-mediated 3'-5' exonucleolytic degradation, or deadenylation-dependent mRNA decaping and subsequent 5'-3' exonucleolytic degradation by XRN1. May also be involved in post-transcriptional maturation of mRNA poly(A) tails. The polypeptide is PAN2-PAN3 deadenylation complex catalytic subunit PAN2 (Cryptococcus neoformans var. neoformans serotype D (strain B-3501A) (Filobasidiella neoformans)).